We begin with the raw amino-acid sequence, 271 residues long: Fatty acid elongase 2 (271 aa).

The helical transmembrane segment at 16 to 36 threads the bilayer; sequence WMIDNVDVAGFLCLLYLGLVW. A glycan (N-linked (GlcNAc...) asparagine) is linked at asparagine 52. Transmembrane regions (helical) follow at residues 59–79 and 110–130; these read VFIMWNLFLSTFSVIGMIVVV and FWVGVFALSKIPELFDTVLLV. The HxxHH motif motif lies at 140 to 144; the sequence is HWYHH. Histidine 143 serves as the catalytic Nucleophile. 3 helical membrane-spanning segments follow: residues 162–182, 194–214, and 241–261; these read IFVFVAMNLTVHAVMYFYFAM, IAPVITIMQILQMIVGSAVTM, and GVVMYLSYLYLFAALFVESYL.

Belongs to the ELO family.

Its subcellular location is the endoplasmic reticulum membrane. The enzyme catalyses an acyl-CoA + malonyl-CoA + H(+) = a 3-oxoacyl-CoA + CO2 + CoA. It participates in lipid metabolism; fatty acid biosynthesis. In terms of biological role, involved in the synthesis of fatty acids. Elongates C10 fatty acids to C14. The protein is Fatty acid elongase 2 of Trypanosoma brucei brucei (strain 927/4 GUTat10.1).